Here is a 504-residue protein sequence, read N- to C-terminus: Pentatricopeptide repeat-containing protein At1g05600 (504 aa).

PPR repeat units follow at residues 45-79 (NGSV…SCEC), 80-114 (KDSV…NCVN), 115-145 (WSLS…YCYG), 151-185 (RITA…GCYP), 186-216 (DRDS…MFWR), 225-259 (DIVV…GLKA), 260-296 (PKRC…GAIP), 297-331 (CLDS…GFEP), 332-367 (TPFI…HCLP), 368-398 (TVGV…MSKQ), 404-438 (NEET…SHFP), and 439-473 (GVET…DMVP).

Belongs to the PPR family. P subfamily.

In Arabidopsis thaliana (Mouse-ear cress), this protein is Pentatricopeptide repeat-containing protein At1g05600.